A 250-amino-acid polypeptide reads, in one-letter code: Glucosamine-6-phosphate deaminase (250 aa).

Residue aspartate 67 is the Proton acceptor; for enolization step of the active site. The For ring-opening step role is filled by asparagine 136. Histidine 138 functions as the Proton acceptor; for ring-opening step in the catalytic mechanism. Glutamate 143 serves as the catalytic For ring-opening step.

Belongs to the glucosamine/galactosamine-6-phosphate isomerase family. NagB subfamily.

The catalysed reaction is alpha-D-glucosamine 6-phosphate + H2O = beta-D-fructose 6-phosphate + NH4(+). Its pathway is amino-sugar metabolism; N-acetylneuraminate degradation; D-fructose 6-phosphate from N-acetylneuraminate: step 5/5. Functionally, catalyzes the reversible isomerization-deamination of glucosamine 6-phosphate (GlcN6P) to form fructose 6-phosphate (Fru6P) and ammonium ion. This chain is Glucosamine-6-phosphate deaminase, found in Oceanobacillus iheyensis (strain DSM 14371 / CIP 107618 / JCM 11309 / KCTC 3954 / HTE831).